A 188-amino-acid polypeptide reads, in one-letter code: Putative nucleotidase OB0422 (188 aa).

The protein belongs to the 5'(3')-deoxyribonucleotidase family.

The sequence is that of Putative nucleotidase OB0422 from Oceanobacillus iheyensis (strain DSM 14371 / CIP 107618 / JCM 11309 / KCTC 3954 / HTE831).